Consider the following 486-residue polypeptide: PTS system N-acetylmuramic acid-specific EIIBC component (486 aa).

A PTS EIIB type-1 domain is found at 1–89 (MAKITQTMIS…NKLIESVING (89 aa)). The active-site Phosphocysteine intermediate; for EIIB activity is Cys28. The PTS EIIC type-1 domain occupies 127–486 (SKFATIFTPL…FFGSKDVDLS (360 aa)). Helical transmembrane passes span 129-149 (FATIFTPLIPGFIAAGLLLGF), 170-190 (LIAYMKVFGKGLFAFLSILIG), 196-216 (AFGGSGVNGAILASLFVLGYN), 230-250 (FFGYTIDPRGNIIGVLLAAII), 268-288 (MILTSVVTLLIMGVVTFVVIM), 312-332 (AAILAGLFLISVVFGIHQGFV), 347-367 (LFPILAMAGGGQVGASLALYF), 381-401 (GAIIPGILGIGEPLIYGVTLP), 411-431 (IGGAAGGFFIGLVSYLGLPVG), and 453-473 (IFAGMAVFVVGLLISYVVGFL).

Its subcellular location is the cell inner membrane. It catalyses the reaction N-acetyl-beta-D-muramate(out) + N(pros)-phospho-L-histidyl-[protein] = N-acetyl-beta-D-muramate 6-phosphate(in) + L-histidyl-[protein]. Its function is as follows. The phosphoenolpyruvate-dependent sugar phosphotransferase system (sugar PTS), a major carbohydrate active transport system, catalyzes the phosphorylation of incoming sugar substrates concomitantly with their translocation across the cell membrane. This system is involved in N-acetylmuramic acid (MurNAc) transport, yielding cytoplasmic MurNAc-6-P. Is also able to take up anhydro-N-acetylmuramic acid (anhMurNAc), but cannot phosphorylate the carbon 6, probably because of the 1,6-anhydro ring. This Vibrio vulnificus (strain YJ016) protein is PTS system N-acetylmuramic acid-specific EIIBC component (murP).